A 439-amino-acid polypeptide reads, in one-letter code: Orphan methyltransferase M.SPRI (439 aa).

Positions 4–436 constitute an SAM-dependent MTase C5-type domain; sequence LRVMSLFSGI…KELIHTYINK (433 aa). C78 is a catalytic residue.

It belongs to the class I-like SAM-binding methyltransferase superfamily. C5-methyltransferase family. As to quaternary structure, monomer.

The enzyme catalyses a 2'-deoxycytidine in DNA + S-adenosyl-L-methionine = a 5-methyl-2'-deoxycytidine in DNA + S-adenosyl-L-homocysteine + H(+). Functionally, a methyltransferase that methylates the C-1 in the sequence 5'-GGCC-3' and both cytosines in the sequence 5'-CCGG-3'. A methyltransferase that methylates C-3 within the sequence 5'-GGCC-3', C-1 in 5'-CCGG-3' and C-2 in 5'-CCWGG-3'. Modification confers resistance against restriction enzymes that recognize these sequences. The polypeptide is Orphan methyltransferase M.SPRI (Bacillus phage SPR (Bacteriophage SPR)).